Consider the following 71-residue polypeptide: High-potential iron-sulfur protein isozyme 2 (71 aa).

Positions 34, 37, 51, and 65 each coordinate [4Fe-4S] cluster.

The protein belongs to the high-potential iron-sulfur protein (HiPIP) family. As to quaternary structure, homodimer.

In terms of biological role, specific class of high-redox-potential 4Fe-4S ferredoxins. Functions in anaerobic electron transport in most purple and in some other photosynthetic bacteria and in at least one genus (Paracoccus) of halophilic, denitrifying bacteria. The chain is High-potential iron-sulfur protein isozyme 2 (hip2) from Ectothiorhodospira shaposhnikovii (Ectothiorhodospira vacuolata).